Reading from the N-terminus, the 288-residue chain is Elongation factor Ts (288 aa).

The segment at 79 to 82 (TDFV) is involved in Mg(2+) ion dislocation from EF-Tu.

The protein belongs to the EF-Ts family.

Its subcellular location is the cytoplasm. In terms of biological role, associates with the EF-Tu.GDP complex and induces the exchange of GDP to GTP. It remains bound to the aminoacyl-tRNA.EF-Tu.GTP complex up to the GTP hydrolysis stage on the ribosome. The sequence is that of Elongation factor Ts from Ehrlichia ruminantium (strain Welgevonden).